The chain runs to 204 residues: uncharacterized protein (204 aa).

This is an uncharacterized protein from Saccharomyces cerevisiae (strain ATCC 204508 / S288c) (Baker's yeast).